The sequence spans 297 residues: MDCQENEYRDQWGRCVTCQQCGPGQELSKDCGYGEGGDAHCIVCPPRKYKSTWGHHRCQTCITCAVINRVQKANCTNTSNAICGDCLPRFYRKTRIGGLQDQECIPCTKQTPSSEVQCTFQLSLVKVDAHTVPPREATLVALVGSLLVVFALAFLGLFFLYCKQIFNRHCQCRDSLQYEAEKTVEEDSLFPVPPGQETSPEFPANEGILEIKPLNSILDDDCSSTRGFPTQESFTMASCASESHSQWVHTPIECTELDLQKFSSSIPSTGPETLRENTAEHSGDRLELYVPFEVPSL.

The Extracellular segment spans residues 1 to 138 (MDCQENEYRD…AHTVPPREAT (138 aa)). TNFR-Cys repeat units follow at residues 2 to 41 (DCQE…DAHC), 43 to 83 (VCPP…NAIC), and 85 to 118 (DCLP…EVQC). 8 disulfides stabilise this stretch: Cys-3-Cys-15, Cys-18-Cys-31, Cys-21-Cys-41, Cys-44-Cys-58, Cys-61-Cys-75, Cys-64-Cys-83, Cys-86-Cys-104, and Cys-107-Cys-118. N-linked (GlcNAc...) asparagine glycans are attached at residues Asn-74 and Asn-77. Residues 139–159 (LVALVGSLLVVFALAFLGLFF) traverse the membrane as a helical; Signal-anchor for type III membrane protein segment. The Cytoplasmic portion of the chain corresponds to 160-297 (LYCKQIFNRH…LYVPFEVPSL (138 aa)).

Associates with TRAF1, TRAF3 and TRAF6.

It is found in the membrane. In terms of biological role, receptor for EDA isoform A2, but not for EDA isoform A1. Mediates the activation of the NF-kappa-B and JNK pathways. Activation seems to be mediated by binding to TRAF3 and TRAF6. The protein is Tumor necrosis factor receptor superfamily member 27 (Eda2r) of Mus musculus (Mouse).